The chain runs to 478 residues: MTIAVDLQGRPFHFIGIGGIGMSALAQVVTERQLPVSGSDIRRSHITDRLAQLGAQIFDRQAATNLEFFQEAVSAGQSPQVICSTAIHAHNEEYQAAIDLGCPVFHRSDLLAALLRVYESIAVAGTHGKTTTSGLIAYLLYQAGLDPTVVIGGEVNALGGNARLGQGRHLVAEADESDGSLVKLQAAIGIITNIELDHPDHYCDLEAVISTFKTFSDNCSQLIANWDCPTVRDRLPGTISYSLDPARGADYTVDQVSFRGSGTQARIWERGELLGRIHLPLLEAHNLSNALAAIAACRHLGMDFASIREGLAGFEGARRRFEFRGSAQGIQFVDDYAHHPSELAATLAAARLQIDSGCSRLPEVPKRLVAIFQPHRYSRTQAFLAEFAQSFGPADLVLISDIYAAGERNPGQLSGQTLADAIAQYQANVHYAPDLEAVEQRLHQLLQPGDLALFLGAGNLNQVIPRLLDHYACDRSAA.

Belongs to the MurCDEF family.

The protein localises to the cytoplasm. It catalyses the reaction UDP-N-acetyl-alpha-D-muramate + L-alanine + ATP = UDP-N-acetyl-alpha-D-muramoyl-L-alanine + ADP + phosphate + H(+). It functions in the pathway cell wall biogenesis; peptidoglycan biosynthesis. In terms of biological role, cell wall formation. This Synechococcus elongatus (strain ATCC 33912 / PCC 7942 / FACHB-805) (Anacystis nidulans R2) protein is UDP-N-acetylmuramate--L-alanine ligase (murC).